Reading from the N-terminus, the 246-residue chain is Bis(5'-nucleosyl)-tetraphosphatase PrpE [asymmetrical] (246 aa).

Belongs to the PrpE family. Requires Ni(2+) as cofactor.

It catalyses the reaction P(1),P(4)-bis(5'-guanosyl) tetraphosphate + H2O = GMP + GTP + 2 H(+). Its function is as follows. Asymmetrically hydrolyzes Ap4p to yield AMP and ATP. This is Bis(5'-nucleosyl)-tetraphosphatase PrpE [asymmetrical] from Bacillus thuringiensis (strain Al Hakam).